An 899-amino-acid chain; its full sequence is Solute carrier family 12 member 9 (899 aa).

Over 1 to 42 (MANEHSPLLVHGVYSMMGNAEDSRGGSAGTGEASNPKTDPRK) the chain is Cytoplasmic. The chain crosses the membrane as a helical span at residues 43–63 (LNTFFGVMVPTILSMFSIVLF). At 64 to 78 (LRTGFVVGHAGLLHG) the chain is on the extracellular side. The chain crosses the membrane as a helical span at residues 79–99 (LLMLFVAYFIISLTILSICAI). At 100-125 (STNGAVEGGGAYFMISRSLGPEFGGS) the chain is on the cytoplasmic side. The helical transmembrane segment at 126–146 (IGLMFYLAKVCACGVYVLGLV) threads the bilayer. Residues 147-175 (EAIMDVFGQDPGSSVAQGLRVLPQGYWYT) are Extracellular-facing. The helical transmembrane segment at 176 to 196 (VLYSSVVLLLCMLVCLVGAHI) threads the bilayer. Over 197–201 (YAKAS) the chain is Cytoplasmic. The helical transmembrane segment at 202-222 (FLILLVVTVSLISIIISPLIV) threads the bilayer. Residues 223–269 (SPQGFNITHTYGNNHSVTVSPSYTGFNSTTLKNNLGPRYSLDYSTNT) are Extracellular-facing. Residues Asn228, Asn236, and Asn249 are each glycosylated (N-linked (GlcNAc...) asparagine). A helical membrane pass occupies residues 270–290 (MMSFATVFAVMFTSCTGIMAG). Residues 291–306 (ANMSGELKNPSESIPK) lie on the Cytoplasmic side of the membrane. Residues 307-327 (GTIMAVAYTFTVYVLLYLLLS) traverse the membrane as a helical segment. Topologically, residues 328 to 350 (STCDRSLLLNDYAVFQRVNVWPP) are extracellular. The chain crosses the membrane as a helical span at residues 351–371 (FVTIGVYCASLSAAMCSMIGA). At 372-373 (SR) the chain is on the cytoplasmic side. The helical transmembrane segment at 374–394 (ILHALALDQLFGLPLAPAAVT) threads the bilayer. Topologically, residues 395 to 399 (SSSGN) are extracellular. The helical transmembrane segment at 400–420 (PWVSVLYTWALVQCTLFAGQL) threads the bilayer. Position 421 (Asn421) is a topological domain, cytoplasmic. The helical transmembrane segment at 422–442 (VIAGIVTVFYLLAYAAVDLAC) threads the bilayer. Over 443 to 455 (LALEWASAPNFRP) the chain is Extracellular. Residues 456-476 (TFQFFSWHTCLLGIISCVVMM) traverse the membrane as a helical segment. At 477–487 (FVINPVYSSAS) the chain is on the extracellular side. The chain crosses the membrane as a helical span at residues 488-510 (IVLLLLLLLFLHYRSPTSSWGYI). Residues 511–563 (SQALIFHQVRKYLLMLDSRKDHVKFWRPQVLLMVSNPRSSCQLICFVNQLKKG) lie on the Cytoplasmic side of the membrane. A helical transmembrane segment spans residues 564–584 (GLFVLGHVQIGDLDVLPADPV). Over 585 to 749 (QPQYNFWLSL…NLLTPGSASY (165 aa)) the chain is Extracellular. Residues 750–770 (ADVGSLFLLQMACVLNMASGW) form a helical membrane-spanning segment. Residues 771-899 (RRARLRIFVC…GVTPVTCTEL (129 aa)) are Cytoplasmic-facing.

The protein belongs to the SLC12A transporter family.

The protein localises to the cell membrane. It localises to the lysosome membrane. Its function is as follows. Seems to correspond to a subunit of a multimeric transport system and thus, additional subunits may be required for its function. May play a role in lysosomal ion flux and osmoregulation. The polypeptide is Solute carrier family 12 member 9 (slc12a9) (Danio rerio (Zebrafish)).